A 544-amino-acid polypeptide reads, in one-letter code: Chaperonin GroEL (544 aa).

ATP is bound by residues 29 to 32 (TLGP), Lys50, 86 to 90 (DGTTT), Gly413, 479 to 481 (DAA), and Asp495.

This sequence belongs to the chaperonin (HSP60) family. In terms of assembly, forms a cylinder of 14 subunits composed of two heptameric rings stacked back-to-back. Interacts with the co-chaperonin GroES.

It localises to the cytoplasm. The catalysed reaction is ATP + H2O + a folded polypeptide = ADP + phosphate + an unfolded polypeptide.. In terms of biological role, together with its co-chaperonin GroES, plays an essential role in assisting protein folding. The GroEL-GroES system forms a nano-cage that allows encapsulation of the non-native substrate proteins and provides a physical environment optimized to promote and accelerate protein folding. This Borrelia duttonii (strain Ly) protein is Chaperonin GroEL.